The following is a 55-amino-acid chain: Rubredoxin-2 (55 aa).

Positions 1–54 constitute a Rubredoxin-like domain; the sequence is MRKWQCVVCGFIYDEALGLPEEGIPAGTRWEDIPADWVCPDCGVGKIDFEMIEI. Fe cation-binding residues include cysteine 6, cysteine 9, cysteine 39, and cysteine 42.

Belongs to the rubredoxin family. Fe(3+) is required as a cofactor.

Its subcellular location is the cytoplasm. Its pathway is hydrocarbon metabolism; alkane degradation. Involved in the hydrocarbon hydroxylating system, which transfers electrons from NADH to rubredoxin reductase and then through rubredoxin to alkane 1 monooxygenase. The polypeptide is Rubredoxin-2 (rubA2) (Pseudomonas aeruginosa (strain ATCC 15692 / DSM 22644 / CIP 104116 / JCM 14847 / LMG 12228 / 1C / PRS 101 / PAO1)).